A 211-amino-acid polypeptide reads, in one-letter code: tRNA (guanine-N(7)-)-methyltransferase (211 aa).

S-adenosyl-L-methionine is bound by residues Glu-44, Asp-69, Asp-96, and Asp-118. The active site involves Asp-118. Lys-122 lines the substrate pocket. Positions 124–129 are interaction with RNA; the sequence is RHEKRR. Residues Asp-154 and 191–194 contribute to the substrate site; that span reads TEYE.

It belongs to the class I-like SAM-binding methyltransferase superfamily. TrmB family.

It carries out the reaction guanosine(46) in tRNA + S-adenosyl-L-methionine = N(7)-methylguanosine(46) in tRNA + S-adenosyl-L-homocysteine. It functions in the pathway tRNA modification; N(7)-methylguanine-tRNA biosynthesis. Catalyzes the formation of N(7)-methylguanine at position 46 (m7G46) in tRNA. The polypeptide is tRNA (guanine-N(7)-)-methyltransferase (Streptococcus pneumoniae (strain Taiwan19F-14)).